The following is a 298-amino-acid chain: Acetyl-coenzyme A carboxylase carboxyl transferase subunit beta (298 aa).

Residues Met1 to Pro21 form a disordered region. In terms of domain architecture, CoA carboxyltransferase N-terminal spans Pro41 to Pro298. Cys45, Cys48, Cys64, and Cys67 together coordinate Zn(2+). The C4-type zinc-finger motif lies at Cys45–Cys67.

This sequence belongs to the AccD/PCCB family. In terms of assembly, acetyl-CoA carboxylase is a heterohexamer composed of biotin carboxyl carrier protein (AccB), biotin carboxylase (AccC) and two subunits each of ACCase subunit alpha (AccA) and ACCase subunit beta (AccD). Requires Zn(2+) as cofactor.

The protein localises to the cytoplasm. It carries out the reaction N(6)-carboxybiotinyl-L-lysyl-[protein] + acetyl-CoA = N(6)-biotinyl-L-lysyl-[protein] + malonyl-CoA. It functions in the pathway lipid metabolism; malonyl-CoA biosynthesis; malonyl-CoA from acetyl-CoA: step 1/1. Functionally, component of the acetyl coenzyme A carboxylase (ACC) complex. Biotin carboxylase (BC) catalyzes the carboxylation of biotin on its carrier protein (BCCP) and then the CO(2) group is transferred by the transcarboxylase to acetyl-CoA to form malonyl-CoA. The chain is Acetyl-coenzyme A carboxylase carboxyl transferase subunit beta from Acinetobacter baumannii (strain AYE).